The primary structure comprises 154 residues: MKKITNNVTIWIKPKTVEKKWYLIDAADRVLGKVAVDVVRILRGKHKAYYTPHQDLGDNVIIINASKVRLTGKKHQQKLYYRHSRYPGGLYSDTFKTLSERKPCAPLEIAIKGMLPKGPLGRDLFRNLKVFSGSEHTLKAQNPIKLEANLREVK.

The protein belongs to the universal ribosomal protein uL13 family. Part of the 50S ribosomal subunit.

Functionally, this protein is one of the early assembly proteins of the 50S ribosomal subunit, although it is not seen to bind rRNA by itself. It is important during the early stages of 50S assembly. In Borrelia garinii subsp. bavariensis (strain ATCC BAA-2496 / DSM 23469 / PBi) (Borreliella bavariensis), this protein is Large ribosomal subunit protein uL13.